The sequence spans 954 residues: Bifunctional glutamine synthetase adenylyltransferase/adenylyl-removing enzyme (954 aa).

The tract at residues 1 to 452 (MAVQKDSNKS…HFKATVGGEE (452 aa)) is adenylyl removase. The tract at residues 458-954 (EHWTAQLWNV…ILAIYQAILE (497 aa)) is adenylyl transferase.

This sequence belongs to the GlnE family. It depends on Mg(2+) as a cofactor.

The catalysed reaction is [glutamine synthetase]-O(4)-(5'-adenylyl)-L-tyrosine + phosphate = [glutamine synthetase]-L-tyrosine + ADP. It carries out the reaction [glutamine synthetase]-L-tyrosine + ATP = [glutamine synthetase]-O(4)-(5'-adenylyl)-L-tyrosine + diphosphate. Functionally, involved in the regulation of glutamine synthetase GlnA, a key enzyme in the process to assimilate ammonia. When cellular nitrogen levels are high, the C-terminal adenylyl transferase (AT) inactivates GlnA by covalent transfer of an adenylyl group from ATP to specific tyrosine residue of GlnA, thus reducing its activity. Conversely, when nitrogen levels are low, the N-terminal adenylyl removase (AR) activates GlnA by removing the adenylyl group by phosphorolysis, increasing its activity. The regulatory region of GlnE binds the signal transduction protein PII (GlnB) which indicates the nitrogen status of the cell. This is Bifunctional glutamine synthetase adenylyltransferase/adenylyl-removing enzyme from Shewanella oneidensis (strain ATCC 700550 / JCM 31522 / CIP 106686 / LMG 19005 / NCIMB 14063 / MR-1).